A 210-amino-acid chain; its full sequence is Urease accessory protein UreE (210 aa).

Residues 136–210 are disordered; the sequence is PEGGAYAEPS…HGHSHAHDHK (75 aa). Basic and acidic residues-rich tracts occupy residues 145–169 and 178–196; these read SHAHGDHDHDHHGHDHHGHDHTSHD and HDHDHGHAHDDHVHDEHCG. Basic residues predominate over residues 197-210; sequence HDHHHGHSHAHDHK.

Belongs to the UreE family.

The protein resides in the cytoplasm. Involved in urease metallocenter assembly. Binds nickel. Probably functions as a nickel donor during metallocenter assembly. This is Urease accessory protein UreE from Bradyrhizobium sp. (strain ORS 278).